The primary structure comprises 113 residues: Protein FMC1 homolog (113 aa).

Positions 94–113 are disordered; that stretch reads SAGLVGLKLPHQPGGKGWEP.

The protein belongs to the FMC1 family. In terms of assembly, interacts with ATPAF2.

Its subcellular location is the mitochondrion. Plays a role in the assembly/stability of the mitochondrial membrane ATP synthase (F(1)F(0) ATP synthase or Complex V). This chain is Protein FMC1 homolog, found in Homo sapiens (Human).